The sequence spans 601 residues: Arginine--tRNA ligase (601 aa).

Residues 135–145 (ANPTGPLHLGH) carry the 'HIGH' region motif.

Belongs to the class-I aminoacyl-tRNA synthetase family. As to quaternary structure, monomer.

It is found in the cytoplasm. The enzyme catalyses tRNA(Arg) + L-arginine + ATP = L-arginyl-tRNA(Arg) + AMP + diphosphate. In Gloeobacter violaceus (strain ATCC 29082 / PCC 7421), this protein is Arginine--tRNA ligase.